A 202-amino-acid chain; its full sequence is Holliday junction resolvase RecU (202 aa).

Mg(2+) contacts are provided by Thr-85, Asp-87, Glu-100, and Gln-119.

The protein belongs to the RecU family. Requires Mg(2+) as cofactor.

It is found in the cytoplasm. It carries out the reaction Endonucleolytic cleavage at a junction such as a reciprocal single-stranded crossover between two homologous DNA duplexes (Holliday junction).. Functionally, endonuclease that resolves Holliday junction intermediates in genetic recombination. Cleaves mobile four-strand junctions by introducing symmetrical nicks in paired strands. Promotes annealing of linear ssDNA with homologous dsDNA. Required for DNA repair, homologous recombination and chromosome segregation. In Streptococcus pyogenes serotype M5 (strain Manfredo), this protein is Holliday junction resolvase RecU.